The sequence spans 212 residues: MLEIFDVSFSLMSNNKLDEVFTLRKDTFKDRLDWAVNCINGMEFDEYDNEHTTYLLGVKEGKVICSVRFIEIKYPNMITGTFYSYFDNLKIPEGNYIESSRFFVDRDRVRNLIGTRNPACVTLFLAMINYARKYHYDGILTIVSHPMLTLLKRSGWRISIIQQGLSEKQERIYLLHLPTDDDSRHALIERITQMTQAESEQLKTLPLLVPLA.

The protein belongs to the autoinducer synthase family.

It catalyses the reaction a fatty acyl-[ACP] + S-adenosyl-L-methionine = an N-acyl-L-homoserine lactone + S-methyl-5'-thioadenosine + holo-[ACP] + H(+). Its function is as follows. Required for the synthesis of OHHL (N-(3-oxohexanoyl)-L-homoserine lactone), an autoinducer molecule which binds to the EchR transcriptional regulator. The chain is Acyl-homoserine-lactone synthase (echI) from Dickeya chrysanthemi (Pectobacterium chrysanthemi).